The primary structure comprises 426 residues: Putative 3-oxoacyl-[acyl-carrier-protein] synthase, mitochondrial (426 aa).

A mitochondrion-targeting transit peptide spans methionine 1 to glycine 18. Positions valine 19–lysine 423 constitute a Ketosynthase family 3 (KS3) domain. Catalysis depends on for beta-ketoacyl synthase activity residues cysteine 170, histidine 311, and histidine 351.

Belongs to the thiolase-like superfamily. Beta-ketoacyl-ACP synthases family.

It localises to the mitochondrion. It carries out the reaction a fatty acyl-[ACP] + malonyl-[ACP] + H(+) = a 3-oxoacyl-[ACP] + holo-[ACP] + CO2. It catalyses the reaction butanoyl-[ACP] + malonyl-[ACP] + H(+) = 3-oxohexanoyl-[ACP] + holo-[ACP] + CO2. The catalysed reaction is hexanoyl-[ACP] + malonyl-[ACP] + H(+) = 3-oxooctanoyl-[ACP] + holo-[ACP] + CO2. The enzyme catalyses octanoyl-[ACP] + malonyl-[ACP] + H(+) = 3-oxodecanoyl-[ACP] + holo-[ACP] + CO2. It carries out the reaction decanoyl-[ACP] + malonyl-[ACP] + H(+) = 3-oxododecanoyl-[ACP] + holo-[ACP] + CO2. It catalyses the reaction dodecanoyl-[ACP] + malonyl-[ACP] + H(+) = 3-oxotetradecanoyl-[ACP] + holo-[ACP] + CO2. The catalysed reaction is tetradecanoyl-[ACP] + malonyl-[ACP] + H(+) = 3-oxohexadecanoyl-[ACP] + holo-[ACP] + CO2. It participates in lipid metabolism; fatty acid biosynthesis. Functionally, may play a role in the biosynthesis of lipoic acid as well as longer chain fatty acids required for optimal mitochondrial function. The polypeptide is Putative 3-oxoacyl-[acyl-carrier-protein] synthase, mitochondrial (Schizosaccharomyces pombe (strain 972 / ATCC 24843) (Fission yeast)).